Reading from the N-terminus, the 188-residue chain is Photosystem I assembly protein Ycf4 (188 aa).

The next 2 helical transmembrane spans lie at Y26–S46 and L70–W90.

Belongs to the Ycf4 family.

The protein resides in the cellular thylakoid membrane. Seems to be required for the assembly of the photosystem I complex. This chain is Photosystem I assembly protein Ycf4, found in Microcystis aeruginosa (strain NIES-843 / IAM M-2473).